Here is a 1026-residue protein sequence, read N- to C-terminus: HEAT repeat-containing protein 4 (1026 aa).

The interval 135 to 175 (AVKTESSANPEKKLKKSKPASTVREAPRPLIHHPCMHPDML) is disordered. 3 HEAT repeats span residues 530-568 (LLPA…NIMQ), 724-760 (KLMT…QIRD), and 761-794 (KMVL…GQVS).

This is HEAT repeat-containing protein 4 (HEATR4) from Homo sapiens (Human).